Consider the following 335-residue polypeptide: Tyrosine-protein phosphatase 1 (335 aa).

In terms of domain architecture, Tyrosine-protein phosphatase spans 15–328; sequence LLGKFKFIQN…LFIYHAAKYL (314 aa). Residue S83 is modified to Phosphoserine; by CLK1. The active-site Phosphocysteine intermediate is the C252.

It belongs to the protein-tyrosine phosphatase family. Non-receptor class subfamily. Activated by phosphorylation at Ser-83.

Its subcellular location is the cytoplasm. It carries out the reaction O-phospho-L-tyrosyl-[protein] + H2O = L-tyrosyl-[protein] + phosphate. Its function is as follows. Is not required for vegetative growth. In Saccharomyces cerevisiae (strain ATCC 204508 / S288c) (Baker's yeast), this protein is Tyrosine-protein phosphatase 1 (PTP1).